Reading from the N-terminus, the 440-residue chain is GTPase Der (440 aa).

2 EngA-type G domains span residues 5–167 (ATVA…PEQE) and 178–353 (IMLS…KEHS). GTP-binding positions include 11–18 (GRPNVGKS), 58–62 (DTGGI), 120–123 (NKSE), 184–191 (GRPNVGKS), 231–235 (DTAGL), and 296–299 (NKWD). In terms of domain architecture, KH-like spans 354 to 438 (KRITTADVNR…PIRILERVKQ (85 aa)).

This sequence belongs to the TRAFAC class TrmE-Era-EngA-EngB-Septin-like GTPase superfamily. EngA (Der) GTPase family. Associates with the 50S ribosomal subunit.

Its function is as follows. GTPase that plays an essential role in the late steps of ribosome biogenesis. This chain is GTPase Der, found in Natranaerobius thermophilus (strain ATCC BAA-1301 / DSM 18059 / JW/NM-WN-LF).